The primary structure comprises 678 residues: Glutamic acid-rich protein (678 aa).

An N-terminal signal peptide occupies residues 1 to 25 (MNVLFLSYNICILFFVVCTLNFSTK). Basic and acidic residues predominate over residues 56 to 79 (EKNKDDNSKSETLLKEEKDEKDDV). Disordered stretches follow at residues 56–194 (EKNK…NLDE), 225–445 (ISSV…VVKN), and 520–678 (VVPR…NAKI). Polar residues predominate over residues 80–107 (PTTSNDNLKNAHNNNEISSSTDPTNIIN). Residues 109–120 (NDKDNENSVDKK) are compositionally biased toward basic and acidic residues. 15 repeat units span residues 120–122 (KKD), 123–125 (KKE), 126–128 (KKH), 129–131 (KKD), 132–134 (KKE), 135–137 (KKE), 138–140 (KKD), 141–143 (KKE), 144–146 (KKD), 147–149 (KKE), 150–152 (KKH), 153–155 (KKE), 156–158 (KKH), 159–161 (KKD), and 162–164 (KKK). A 15 X 3 AA tandem repeats of K-K-[DEHK] region spans residues 120–164 (KKDKKEKKHKKDKKEKKEKKDKKEKKDKKEKKHKKEKKHKKDKKK). The span at 121-165 (KDKKEKKHKKDKKEKKEKKDKKEKKDKKEKKHKKEKKHKKDKKKK) shows a compositional bias: basic residues. 2 stretches are compositionally biased toward basic and acidic residues: residues 231–329 (TSND…EEKE) and 371–411 (PEEH…EHKS). 14 repeat units span residues 372 to 376 (EEHKE), 377 to 381 (GEHKE), 382 to 386 (EEHKE), 387 to 391 (GEHKE), 392 to 396 (GEHKE), 397 to 401 (EEHKE), 402 to 406 (EEHKK), 407 to 411 (EEHKS), 412 to 416 (KEHKS), 417 to 421 (KGKKD), 422 to 426 (KGKKD), 427 to 431 (KGKHK), 432 to 436 (KAKKE), and 437 to 441 (KVKKH). The tract at residues 372-416 (EEHKEGEHKEEEHKEGEHKEGEHKEEEHKEEEHKKEEHKSKEHKS) is 9 X 5 AA tandem repeats of [EGK]-E-H-K-[EKS]. Over residues 412–443 (KEHKSKGKKDKGKKDKGKHKKAKKEKVKKHVV) the composition is skewed to basic residues. Residues 417–441 (KGKKDKGKKDKGKHKKAKKEKVKKH) form a 5 X 5 AA tandem repeats of K-[GAV]-K-[KH]-[DKEH] region. Residues 532 to 565 (AKIEEAELQKQKHVDKEEDKKEESKEVQEESKEV) are compositionally biased toward basic and acidic residues. The span at 566–663 (QEDEEEVEED…EEEEEEEEEE (98 aa)) shows a compositional bias: acidic residues. The span at 667 to 678 (KIKRNLRKNAKI) shows a compositional bias: basic residues.

In Plasmodium falciparum (isolate FC27 / Papua New Guinea), this protein is Glutamic acid-rich protein (GARP).